A 558-amino-acid polypeptide reads, in one-letter code: Serine/threonine-protein phosphatase 2B catalytic subunit (558 aa).

Fe cation contacts are provided by aspartate 128, histidine 130, and aspartate 156. Zn(2+) contacts are provided by aspartate 156 and asparagine 188. The active-site Proton donor is the histidine 189. The Zn(2+) site is built by histidine 237 and histidine 319. 2 disordered regions span residues 415–439 (LRED…NQDP) and 534–558 (ALER…LSTS). Low complexity predominate over residues 420-435 (ATTSPGSASPALPSAA). The span at 534–548 (ALERATREADNDKKL) shows a compositional bias: basic and acidic residues. Residues 549 to 558 (QTLSRRLSTS) show a composition bias toward polar residues.

It belongs to the PPP phosphatase family. PP-2B subfamily. As to quaternary structure, composed of two components (A and B), the A component is the catalytic subunit and the B component confers calcium sensitivity. Fe(3+) serves as cofactor. The cofactor is Zn(2+).

The catalysed reaction is O-phospho-L-seryl-[protein] + H2O = L-seryl-[protein] + phosphate. It carries out the reaction O-phospho-L-threonyl-[protein] + H2O = L-threonyl-[protein] + phosphate. Functionally, calcium-dependent, calmodulin-stimulated protein phosphatase. This subunit may have a role in the calmodulin activation of calcineurin. This is Serine/threonine-protein phosphatase 2B catalytic subunit (cna-1) from Neurospora crassa (strain ATCC 24698 / 74-OR23-1A / CBS 708.71 / DSM 1257 / FGSC 987).